Here is a 432-residue protein sequence, read N- to C-terminus: Glycosyltransferase 6 (432 aa).

The Cytoplasmic portion of the chain corresponds to 1-18; that stretch reads MGKPGGAKTRTAVCLSDG. The helical; Signal-anchor for type II membrane protein transmembrane segment at 19–39 threads the bilayer; sequence VFFLAGAFMSLTLVWSYFSIF. Residues 40–432 are Lumenal-facing; sequence SPSFTSLRHD…LPFDYPNEAW (393 aa). N-linked (GlcNAc...) asparagine glycosylation occurs at Asn-315.

This sequence belongs to the glycosyltransferase 34 family.

Its subcellular location is the golgi apparatus membrane. Its function is as follows. Probable glycosyltransferase that may be involved in the biosynthesis of xyloglucan. This is Glycosyltransferase 6 (GT6) from Arabidopsis thaliana (Mouse-ear cress).